A 665-amino-acid chain; its full sequence is MKKVKQIRVLKPFDLLSEELVFIILDLISPNPSDLKSFSLTCKSFYQLESKHRGSLKPLRSDYLPRILTRYRNTTDLDLTFCPRVTDYALSVVGCLSGPTLRSLDLSRSGSFSAAGLLRLALKCVNLVEIDLSNATEMRDADAAVVAEARSLERLKLGRCKMLTDMGIGCIAVGCKKLNTVSLKWCVGVGDLGVGLLAVKCKDIRTLDLSYLPITGKCLHDILKLQHLEELLLEGCFGVDDDSLKSLRHDCKSLKKLDASSCQNLTHRGLTSLLSGAGYLQRLDLSHCSSVISLDFASSLKKVSALQSIRLDGCSVTPDGLKAIGTLCNSLKEVSLSKCVSVTDEGLSSLVMKLKDLRKLDITCCRKLSRVSITQIANSCPLLVSLKMESCSLVSREAFWLIGQKCRLLEELDLTDNEIDDEGLKSISSCLSLSSLKLGICLNITDKGLSYIGMGCSNLRELDLYRSVGITDVGISTIAQGCIHLETINISYCQDITDKSLVSLSKCSLLQTFESRGCPNITSQGLAAIAVRCKRLAKVDLKKCPSINDAGLLALAHFSQNLKQINVSDTAVTEVGLLSLANIGCLQNIAVVNSSGLRPSGVAAALLGCGGLRKAKLHASLRSLLPLSLIHHLEARGCAFLWKDNTLQAELDPKYWKQQLEEMAP.

An F-box domain is found at 11-60 (KPFDLLSEELVFIILDLISPNPSDLKSFSLTCKSFYQLESKHRGSLKPLR). 21 LRR repeats span residues 61–81 (SDYL…DLTF), 82–108 (CPRV…DLSR), 109–134 (SGSF…DLSN), 135–159 (ATEM…KLGR), 160–185 (CKML…SLKW), 186–211 (CVGV…DLSY), 214–235 (ITGK…LLEG), 236–261 (CFGV…DASS), 262–287 (CQNL…DLSH), 288–312 (CSSV…IRLD), 313–338 (GCSV…SLSK), 339–364 (CVSV…DITC), 365–390 (CRKL…KMES), 391–416 (CSLV…DLTD), 419–440 (IDDE…KLGI), 441–466 (CLNI…DLYR), 467–492 (SVGI…NISY), 493–517 (CQDI…ESRG), 518–543 (CPNI…DLKK), 544–569 (CPSI…NVSD), and 594–619 (SSGL…KLHA).

The protein is F-box/LRR-repeat protein 3 (FBL3) of Arabidopsis thaliana (Mouse-ear cress).